A 233-amino-acid polypeptide reads, in one-letter code: uncharacterized protein (233 aa).

The HTH gntR-type domain maps to 16–84 (KTLAKQVIER…TRGGTYFNDK (69 aa)). Positions 44 to 63 (EMELMDILHVSRPVLREALS) form a DNA-binding region, H-T-H motif.

This is an uncharacterized protein from Bacillus subtilis (strain 168).